The sequence spans 95 residues: Small ribosomal subunit protein bS6 (95 aa).

Belongs to the bacterial ribosomal protein bS6 family.

Its function is as follows. Binds together with bS18 to 16S ribosomal RNA. The protein is Small ribosomal subunit protein bS6 of Clostridium beijerinckii (strain ATCC 51743 / NCIMB 8052) (Clostridium acetobutylicum).